The sequence spans 2344 residues: Pecanex-like protein 1 (2344 aa).

A run of 2 helical transmembrane segments spans residues alanine 33–leucine 53 and methionine 57–valine 77. Disordered stretches follow at residues glutamine 101–arginine 163, serine 271–alanine 290, glutamine 306–arginine 692, and valine 749–arginine 837. Residues serine 143–arginine 163 show a composition bias toward polar residues. Positions histidine 272 to glycine 282 are enriched in basic residues. Residues arginine 328 to proline 343 are compositionally biased toward polar residues. Over residues serine 372–glycine 390 the composition is skewed to low complexity. The span at asparagine 396 to glutamine 406 shows a compositional bias: polar residues. Basic and acidic residues-rich tracts occupy residues leucine 416–alanine 458, arginine 508–glutamate 522, and arginine 531–proline 547. Over residues threonine 557–alanine 572 the composition is skewed to basic residues. Positions serine 616 to serine 638 are enriched in low complexity. The span at valine 749–serine 758 shows a compositional bias: polar residues. Composition is skewed to low complexity over residues alanine 770–alanine 781 and leucine 817–glutamine 835. Helical transmembrane passes span isoleucine 1010–glycine 1030, isoleucine 1035–valine 1055, and isoleucine 1069–aspartate 1089. Asparagine 1094 is a glycosylation site (N-linked (GlcNAc...) asparagine). A helical transmembrane segment spans residues leucine 1119 to valine 1139. A glycan (N-linked (GlcNAc...) asparagine) is linked at asparagine 1158. The next 4 helical transmembrane spans lie at leucine 1163–leucine 1183, histidine 1196–serine 1216, leucine 1269–threonine 1289, and tyrosine 1297–valine 1317. 4 N-linked (GlcNAc...) asparagine glycosylation sites follow: asparagine 1582, asparagine 1723, asparagine 1985, and asparagine 2075. Residues glutamate 2051–arginine 2123 are disordered. 2 stretches are compositionally biased toward polar residues: residues cysteine 2061 to threonine 2081 and proline 2095 to arginine 2118. Residues asparagine 2231, asparagine 2237, and asparagine 2263 are each glycosylated (N-linked (GlcNAc...) asparagine).

Belongs to the pecanex family.

It is found in the membrane. This is Pecanex-like protein 1 from Mus musculus (Mouse).